A 229-amino-acid chain; its full sequence is Somatolactin (229 aa).

A signal peptide spans 1–24 (MHLVSVIQRGVWAVLLWPNLLASS). Cystine bridges form between Cys-29–Cys-39, Cys-87–Cys-203, and Cys-220–Cys-228. 2 N-linked (GlcNAc...) asparagine glycosylation sites follow: Asn-143 and Asn-175.

Belongs to the somatotropin/prolactin family.

It is found in the secreted. The polypeptide is Somatolactin (Cyclopterus lumpus (Lumpsucker)).